The following is a 129-amino-acid chain: M-zodatoxin-Lt8d (129 aa).

An N-terminal signal peptide occupies residues 1–20; sequence MKYFVVALALVAAFACIAES. Positions 21-60 are excised as a propeptide; that stretch reads KPAESEHELAEVEEENELADLEDAVWLEHLADLSDLEEAR. Residues 57 to 60 carry the Processing quadruplet motif motif; that stretch reads EEAR.

Cleavage of the propeptide depends on the processing quadruplet motif (XXXR, with at least one of X being E). In terms of tissue distribution, expressed by the venom gland.

It localises to the secreted. Its function is as follows. Insecticidal, cytolytic and antimicrobial peptide. Forms voltage-dependent, ion-permeable channels in membranes. At high concentration causes cell membrane lysis. The protein is M-zodatoxin-Lt8d (cit 1-4) of Lachesana tarabaevi (Spider).